The following is a 75-amino-acid chain: Putative antitoxin VapB29 (75 aa).

Possibly the antitoxic component of a type II toxin-antitoxin (TA) system. Its cognate toxin is VapC29 (Potential). In Mycobacterium tuberculosis (strain CDC 1551 / Oshkosh), this protein is Putative antitoxin VapB29 (vapB29).